Consider the following 208-residue polypeptide: Thymidylate kinase (208 aa).

10-17 (GPEGSGKT) serves as a coordination point for ATP.

This sequence belongs to the thymidylate kinase family.

It carries out the reaction dTMP + ATP = dTDP + ADP. Functionally, phosphorylation of dTMP to form dTDP in both de novo and salvage pathways of dTTP synthesis. The protein is Thymidylate kinase of Bacillus anthracis.